Here is a 426-residue protein sequence, read N- to C-terminus: Serine--tRNA ligase (426 aa).

233 to 235 (TAE) provides a ligand contact to L-serine. 264–266 (RSE) serves as a coordination point for ATP. E287 is a binding site for L-serine. Residue 351–354 (EISS) participates in ATP binding. S387 lines the L-serine pocket.

The protein belongs to the class-II aminoacyl-tRNA synthetase family. Type-1 seryl-tRNA synthetase subfamily. Homodimer. The tRNA molecule binds across the dimer.

The protein localises to the cytoplasm. It carries out the reaction tRNA(Ser) + L-serine + ATP = L-seryl-tRNA(Ser) + AMP + diphosphate + H(+). The catalysed reaction is tRNA(Sec) + L-serine + ATP = L-seryl-tRNA(Sec) + AMP + diphosphate + H(+). Its pathway is aminoacyl-tRNA biosynthesis; selenocysteinyl-tRNA(Sec) biosynthesis; L-seryl-tRNA(Sec) from L-serine and tRNA(Sec): step 1/1. Its function is as follows. Catalyzes the attachment of serine to tRNA(Ser). Is also able to aminoacylate tRNA(Sec) with serine, to form the misacylated tRNA L-seryl-tRNA(Sec), which will be further converted into selenocysteinyl-tRNA(Sec). The polypeptide is Serine--tRNA ligase (Clostridium botulinum (strain Loch Maree / Type A3)).